The chain runs to 492 residues: High-affinity nickel transport protein (492 aa).

Residues 1 to 24 (MLSRWTRRVNESRLAQRKLTLLGR) lie on the Cytoplasmic side of the membrane. The chain crosses the membrane as a helical span at residues 25–45 (AIALVVGELLFNAVCWIAAGI). Over 46-50 (CFGKT) the chain is Extracellular. A helical membrane pass occupies residues 51 to 71 (DGILGLALLAWTIGLRHGLDA). At 72–94 (DHISAIDNATRQLVSQGQLPITC) the chain is on the cytoplasmic side. A helical transmembrane segment spans residues 95–115 (GLFFSLGHSTIVIVVNVAIAV). Residues 116–136 (SVDIYDKLDRVGSIGGIVGAA) lie on the Extracellular side of the membrane. The helical transmembrane segment at 137-157 (VSASFLFLIACLNIYFLVGAI) threads the bilayer. Topologically, residues 158-210 (KQRRSMKRRQALGLPPDEDEGDPSKIYGGGCMVRVVGPILRAVDRPWKMYPVG) are cytoplasmic. A helical transmembrane segment spans residues 211 to 231 (VLFGFGFDTASSIALLAISAI). The Extracellular portion of the chain corresponds to 232–239 (AQRGPNGD). A helical membrane pass occupies residues 240 to 260 (AISHGKIVILPFLFTAGMSLV). The Cytoplasmic portion of the chain corresponds to 261-382 (DSLDSILMLY…AKANTMSSLS (122 aa)). A helical membrane pass occupies residues 383–403 (IILTLLSILVALSISLIEIMG). The Extracellular portion of the chain corresponds to 404–439 (LIGDNCTQCQDAANDPDGGGLAGSWWRAWARANDQS). An N-linked (GlcNAc...) asparagine glycan is attached at Asn408. A helical transmembrane segment spans residues 440-460 (GYIGAAIVGCFAAILAGWYGA). Over 461 to 492 (KWGKKKWKARRDANAAIVLEDNEDDAAETPVA) the chain is Cytoplasmic.

The protein belongs to the NiCoT transporter (TC 2.A.52) family.

It is found in the cell membrane. Functionally, high-affinity nickel-specific transporter responsible for nickel uptake and required for high levels of activity of urease URE1. Does not transport cobalt. Plays a role in host brain invasion. The sequence is that of High-affinity nickel transport protein from Cryptococcus neoformans var. grubii serotype A (strain H99 / ATCC 208821 / CBS 10515 / FGSC 9487) (Filobasidiella neoformans var. grubii).